The following is a 715-amino-acid chain: MARTTAINRYRNIGICAHVDAGKTTTTERILFYTGLSHKMGEVHDGAATTDWMVQEQERGITITSAAVTTFWKGSRGQYDNYRVNVIDTPGHVDFTIEVERSLRVLDGAVVVFCGTSGVEPQSETVWRQANKYGVPRVVYVNKMDRAGANFLRVVGQIKNRLGHTPVPVQLAIGAEDNFEGQVDLIKMKAIYWNDDDKGTTYREEEIPADMLDLANEWRSNMVEAAAEANEELMNKYLEEGDLTVEEIKAGLRARTLASEIVPAVCGSSFKNKGVPLVLDAVIDFLPAPTEIPAIKGIHPDLIEKPKDELVEADYDERHADDAEPFSALAFKIATDPFVGTLTFVRVYSGFLSSGDSVINSVKGKKERVGRMVQMHANQREEIKEVRAGDIAALIGMKDVTTGDTLCDLDKQIILERMDFPEPVISVAVEPKTKQDQEKMGIALGKLAQEDPSFRVKTDEETGQTIISGMGELHLDILVDRMKREFNVEANIGKPQVSYREKISKSNVEIEGKFVRQSGGRGQFGHCWIRFSEPDVDANGNITEGLVFTNEVVGGVVPKEYIPAIQKGIEEQMKNGVVAGYPLIGLKATVFDGSYHDVDSNEMAFKVAASMATKQLAQKGGGVVLEPIMKVEVVTPEDYMGDVMGDLNRRRGLIQGMDDSVSGKVIRAEVPLGEMFGYATDVRSMSQGRASYSMEFSKYAEAPSNIVEALVKKQG.

In terms of domain architecture, tr-type G spans 8–290 (NRYRNIGICA…AVIDFLPAPT (283 aa)). GTP contacts are provided by residues 17-24 (AHVDAGKT), 88-92 (DTPGH), and 142-145 (NKMD).

This sequence belongs to the TRAFAC class translation factor GTPase superfamily. Classic translation factor GTPase family. EF-G/EF-2 subfamily.

Its subcellular location is the cytoplasm. In terms of biological role, catalyzes the GTP-dependent ribosomal translocation step during translation elongation. During this step, the ribosome changes from the pre-translocational (PRE) to the post-translocational (POST) state as the newly formed A-site-bound peptidyl-tRNA and P-site-bound deacylated tRNA move to the P and E sites, respectively. Catalyzes the coordinated movement of the two tRNA molecules, the mRNA and conformational changes in the ribosome. This is Elongation factor G from Pseudomonas fluorescens (strain ATCC BAA-477 / NRRL B-23932 / Pf-5).